The following is a 228-amino-acid chain: Cytidylate kinase (228 aa).

17–25 (GPTASGKGT) lines the ATP pocket.

This sequence belongs to the cytidylate kinase family. Type 1 subfamily.

Its subcellular location is the cytoplasm. It catalyses the reaction CMP + ATP = CDP + ADP. The catalysed reaction is dCMP + ATP = dCDP + ADP. The sequence is that of Cytidylate kinase from Burkholderia mallei (strain NCTC 10247).